Consider the following 271-residue polypeptide: ATP synthase subunit a (271 aa).

Helical transmembrane passes span 38–58, 100–120, 146–166, 220–240, and 242–262; these read FWTL…LFLA, LIAP…LMDL, DVNI…FYSI, LIFI…LNVP, and AIFH…LTIV.

It belongs to the ATPase A chain family. F-type ATPases have 2 components, CF(1) - the catalytic core - and CF(0) - the membrane proton channel. CF(1) has five subunits: alpha(3), beta(3), gamma(1), delta(1), epsilon(1). CF(0) has three main subunits: a(1), b(2) and c(9-12). The alpha and beta chains form an alternating ring which encloses part of the gamma chain. CF(1) is attached to CF(0) by a central stalk formed by the gamma and epsilon chains, while a peripheral stalk is formed by the delta and b chains.

Its subcellular location is the cell inner membrane. Functionally, key component of the proton channel; it plays a direct role in the translocation of protons across the membrane. The sequence is that of ATP synthase subunit a from Enterobacter sp. (strain 638).